The following is a 361-amino-acid chain: Probable U3 small nucleolar RNA-associated protein 11 (361 aa).

4 disordered regions span residues 1–52, 200–235, 262–295, and 311–361; these read MTKG…KKRK, LMSGGHQIKSAAQKRKERREVQEKMRRSGADATPET, KRESEATASSSKGAPGDDGEQEEAAAQDEVTRLL, and RHVR…RRAR. Residues 17-33 show a composition bias toward basic residues; it reads HLKRKTHLERSQPKSRQ. Composition is skewed to basic and acidic residues over residues 37–46 and 217–228; these read QLEKHKDHVL and RREVQEKMRRSG. The span at 278 to 287 shows a compositional bias: acidic residues; it reads DDGEQEEAAA. The segment covering 342 to 352 has biased composition (basic and acidic residues); that stretch reads RQMEQRRESRF.

It belongs to the UTP11 family. Component of the ribosomal small subunit (SSU) processome.

The protein localises to the nucleus. It is found in the nucleolus. In terms of biological role, involved in nucleolar processing of pre-18S ribosomal RNA. This Leishmania major protein is Probable U3 small nucleolar RNA-associated protein 11.